Consider the following 291-residue polypeptide: ATP synthase gamma chain (291 aa).

It belongs to the ATPase gamma chain family. As to quaternary structure, F-type ATPases have 2 components, CF(1) - the catalytic core - and CF(0) - the membrane proton channel. CF(1) has five subunits: alpha(3), beta(3), gamma(1), delta(1), epsilon(1). CF(0) has three main subunits: a, b and c.

Its subcellular location is the cell inner membrane. Produces ATP from ADP in the presence of a proton gradient across the membrane. The gamma chain is believed to be important in regulating ATPase activity and the flow of protons through the CF(0) complex. The protein is ATP synthase gamma chain of Rhodopseudomonas palustris (strain BisB5).